The sequence spans 290 residues: Inositol-1-monophosphatase (290 aa).

Residues Glu-83, Asp-104, Ile-106, and Asp-107 each contribute to the Mg(2+) site. Glu-83 contributes to the substrate binding site. Substrate is bound by residues 106–109, Arg-206, and Asp-235; that span reads IDGT. Asp-235 contributes to the Mg(2+) binding site.

This sequence belongs to the inositol monophosphatase superfamily. Requires Mg(2+) as cofactor.

It catalyses the reaction a myo-inositol phosphate + H2O = myo-inositol + phosphate. The polypeptide is Inositol-1-monophosphatase (suhB) (Mycobacterium bovis (strain ATCC BAA-935 / AF2122/97)).